The primary structure comprises 338 residues: MEFLHESVALGVDLLILGLCAREYVHYKRTAKVLKAAPQYNIDGDLKSVVERQRDKKIPYAVIRGTVTPIGVPLRSSLVPSVSGVLQIVKLHEHRVTRGFAGFWTEQHKLLHESANEMPFELRNQSHGVEIVDALSAAVLDVDVVYDNYEPSNLSLFDHVFGFFSGVRQRGLQTTEEVLREGSFLTAIGELELDGDTLRMQPSNEGPLFLTTATKSTLIKRFEDAKTTTILKLVVCSTISAILVAFIAKKLYRKRKQEREEAKIRERLDTERRERRARSRPHTLSQDQLCVVCSTNPKEIILLPCGHVCLCEDCAQKISVTCPVCRGSIVSKAAAFIA.

At 1–3 (MEF) the chain is on the cytoplasmic side. The helical transmembrane segment at 4–24 (LHESVALGVDLLILGLCAREY) threads the bilayer. At 25 to 227 (VHYKRTAKVL…LIKRFEDAKT (203 aa)) the chain is on the mitochondrial intermembrane side. The chain crosses the membrane as a helical span at residues 228 to 248 (TTILKLVVCSTISAILVAFIA). Over 249–338 (KKLYRKRKQE…IVSKAAAFIA (90 aa)) the chain is Cytoplasmic. The segment at 290 to 326 (CVVCSTNPKEIILLPCGHVCLCEDCAQKISVTCPVCR) adopts an RING-type zinc-finger fold.

As to quaternary structure, interacts with Marf. Auto-ubiquitinated.

The protein localises to the mitochondrion outer membrane. The catalysed reaction is S-ubiquitinyl-[E2 ubiquitin-conjugating enzyme]-L-cysteine + [acceptor protein]-L-lysine = [E2 ubiquitin-conjugating enzyme]-L-cysteine + N(6)-ubiquitinyl-[acceptor protein]-L-lysine.. Exhibits weak E3 ubiquitin-protein ligase activity. E3 ubiquitin ligases accept ubiquitin from an E2 ubiquitin-conjugating enzyme in the form of a thioester and then directly transfer the ubiquitin to targeted substrates. Plays a role in the control of mitochondrial morphology by promoting mitochondrial fission. Negatively regulates the mitochondrial fusion protein marf by promoting its ubiquitination, acting in a pathway that is parallel to the park/pink1 regulatory pathway. This chain is Mitochondrial E3 ubiquitin protein ligase 1, found in Drosophila melanogaster (Fruit fly).